The chain runs to 170 residues: Lipoprotein signal peptidase (170 aa).

Transmembrane regions (helical) follow at residues 12-32, 67-87, and 94-113; these read WYWVVVLVFLADQLSKQWVLS, WQRWLFTFVAVGFSVLLSVWL, and MWRLNLAYTLVIGGALGNLI. Catalysis depends on residues D123 and D141. Residues 139–159 traverse the membrane as a helical segment; sequence IADSAICVGAGLIILDSFVAG.

Belongs to the peptidase A8 family.

The protein resides in the cell inner membrane. It carries out the reaction Release of signal peptides from bacterial membrane prolipoproteins. Hydrolyzes -Xaa-Yaa-Zaa-|-(S,diacylglyceryl)Cys-, in which Xaa is hydrophobic (preferably Leu), and Yaa (Ala or Ser) and Zaa (Gly or Ala) have small, neutral side chains.. Its pathway is protein modification; lipoprotein biosynthesis (signal peptide cleavage). In terms of biological role, this protein specifically catalyzes the removal of signal peptides from prolipoproteins. This Shewanella pealeana (strain ATCC 700345 / ANG-SQ1) protein is Lipoprotein signal peptidase.